We begin with the raw amino-acid sequence, 264 residues long: uncharacterized protein (264 aa).

An N-terminal signal peptide occupies residues 1-22 (MGYLKKLALFISVIILGIFIIG). A lipid anchor (N-palmitoyl cysteine) is attached at cysteine 23. The S-diacylglycerol cysteine moiety is linked to residue cysteine 23.

This sequence belongs to the staphylococcal tandem lipoprotein family.

It localises to the cell membrane. This is an uncharacterized protein from Staphylococcus aureus (strain N315).